The sequence spans 335 residues: Olfactory receptor 10R2 (335 aa).

Residues 1–45 (MPQILIFTYLNMFYFFPPLQILAENLTMVTEFLLLGFSSLGEIQL) lie on the Extracellular side of the membrane. A glycan (N-linked (GlcNAc...) asparagine) is linked at Asn-25. Residues 46-66 (ALFVVFLFLYLVILSGNVTII) form a helical membrane-spanning segment. Topologically, residues 67–74 (SVIHLDKS) are cytoplasmic. The chain crosses the membrane as a helical span at residues 75–95 (LHTPMYFFLGILSTSETFYTF). The Extracellular portion of the chain corresponds to 96-119 (VILPKMLINLLSVARTISFNCCAL). Cys-117 and Cys-209 are joined by a disulfide. The chain crosses the membrane as a helical span at residues 120 to 140 (QMFFFLGFAITNCLLLGVMGY). The Cytoplasmic portion of the chain corresponds to 141–159 (DRYAAICHPLHYPTLMSWQ). Residues 160-180 (VCGKLAAACAIGGFLASLTVV) traverse the membrane as a helical segment. Residues 181 to 217 (NLVFSLPFCSANKVNHYFCDISAVILLACTNTDVNEF) lie on the Extracellular side of the membrane. The helical transmembrane segment at 218 to 237 (VIFICGVLVLVVPFLFICVS) threads the bilayer. Topologically, residues 238 to 257 (YLCILRTILKIPSAEGRRKA) are cytoplasmic. The helical transmembrane segment at 258-278 (FSTCASHLSVVIVHYGCASFI) threads the bilayer. Over 279-291 (YLRPTANYVSNKD) the chain is Extracellular. A helical membrane pass occupies residues 292–312 (RLVTVTYTIVTPLLNPMVYSL). Residues 313-335 (RNKDVQLAIRKVLGKKGSLKLYN) are Cytoplasmic-facing.

Belongs to the G-protein coupled receptor 1 family.

The protein localises to the cell membrane. In terms of biological role, odorant receptor. The sequence is that of Olfactory receptor 10R2 (OR10R2) from Homo sapiens (Human).